The primary structure comprises 119 residues: Ergochrome gene cluster protein CPUR_05426 (119 aa).

It participates in pigment biosynthesis. Its function is as follows. Part of the ergochrome gene cluster responsible for the typical purple-black color of the ergot sclerotia. The ergochrome gene cluster produces several ergot pigments including the yellow ergochrome secalonic acid and its derivatives, as well as the red anthraquinones endocrocin and clavorubin. The pathway begins with the synthesis of atrochrysone thioester by the polyketide synthase (PKS) CPUR_05437. The atrochrysone carboxyl ACP thioesterase CPUR_05436 then breaks the thioester bond and releases the atrochrysone carboxylic acid from CPUR_05437. The atrochrysone carboxylic acid is then converted to atrochrysone which is further transformed into emodin anthrone. The next step is performed by the anthrone oxygenase CPUR_05434 that catalyzes the oxidation of emodinanthrone to emodin. Emodin is further modified to yield monodictyphenone via several steps involving CPUR_05427, CPUR_05428, CPUR_05429 and CPUR_05430. The short chain dehydrogenase/reductase CPUR_05418 then catalyzes the C-5 ketoreduction to give the xanthone skeleton of the monomeric units. Ergochromes formation requires further dimerization steps of different xanthone units, probably catalyzed by the cytochrome P450 monooxygenase CPUR_05419. CPUR_05425, CPUR_05426 and CPUR_05431 are unique to Claviceps, thus it is likely that they are involved in further modification of xanthone units or in their dimerization. The yellow ergochromes and the red anthraquinone pigments endocrocin and clavorubin are products from the same PKS derived precursors and the latter are likely shunt products in the pathway of xanthone biosynthesis. It is proposed that atrochrysone carboxylic acid released from the PKS CPUR_05437 can also be converted to endocrocin anthrone which is further oxidized into endocrocin by CPUR_05435. Endocrocin could be then modified to clavorubin, possibly by CPUR_05423 and CPUR_05431. Clavorubin is the principal anthraquinone metabolite produced by the cluster with a much higher yield compared to endocrocin. This Claviceps purpurea (strain 20.1) (Ergot fungus) protein is Ergochrome gene cluster protein CPUR_05426.